The chain runs to 457 residues: Glutamate--tRNA ligase 1 (457 aa).

A 'HIGH' region motif is present at residues 9–19 (PSPTGYIHIGN). The 'KMSKS' region motif lies at 250–254 (GLSKR). ATP is bound at residue K253.

The protein belongs to the class-I aminoacyl-tRNA synthetase family. Glutamate--tRNA ligase type 1 subfamily. As to quaternary structure, monomer.

It is found in the cytoplasm. The enzyme catalyses tRNA(Glu) + L-glutamate + ATP = L-glutamyl-tRNA(Glu) + AMP + diphosphate. Its function is as follows. Catalyzes the attachment of glutamate to tRNA(Glu) in a two-step reaction: glutamate is first activated by ATP to form Glu-AMP and then transferred to the acceptor end of tRNA(Glu). The chain is Glutamate--tRNA ligase 1 from Brucella canis (strain ATCC 23365 / NCTC 10854 / RM-666).